Reading from the N-terminus, the 164-residue chain is Choriogonadotropin subunit beta (164 aa).

The N-terminal stretch at 1 to 20 (MEMLQGLLLCLLLSTGGAWA) is a signal peptide. 6 cysteine pairs are disulfide-bonded: cysteine 29-cysteine 77, cysteine 43-cysteine 92, cysteine 46-cysteine 130, cysteine 54-cysteine 108, cysteine 58-cysteine 110, and cysteine 113-cysteine 120. N-linked (GlcNAc...) asparagine glycosylation occurs at asparagine 50. The interval 133 to 164 (HTSQDSSSKDPPRNLTSPSQLPEPADAPLVPQ) is disordered. O-linked (GalNAc...) serine glycosylation occurs at serine 140. N-linked (GlcNAc...) asparagine glycosylation is present at asparagine 146. The O-linked (GalNAc...) serine glycan is linked to serine 151.

Belongs to the glycoprotein hormones subunit beta family. In terms of assembly, heterodimer of a common alpha chain and a unique beta chain which confers biological specificity to thyrotropin, lutropin, follitropin and gonadotropin.

It is found in the secreted. In terms of biological role, stimulates the ovaries to synthesize the steroids that are essential for the maintenance of pregnancy. The sequence is that of Choriogonadotropin subunit beta (CGB) from Aotus nancymaae (Ma's night monkey).